A 480-amino-acid polypeptide reads, in one-letter code: MNLDHSYATHLGDLGALTKPLRVANPQLVEVNHTLRDALQLPASWFTQSSIMSMLFGNTSSFTTHSFAQKYGGHQFGGWNPDLGDGRGVLLGEAKDKFGKSWDLHLKGAGPTPYSRFADGRAVLRSTLREYLASEALHHMGIPTSRALCLITSDEPVYREKQEKAAMMIRVSQSHIRFGHFEYFYHNGELDKLKRLFDYCFEHHFSACLHSESPHLAMLEKIVTDTATLIAKWQAYGFNHGVMNTDNMSIHGITFDFGPYAFLDDFNPKFVCNHSDHRGRYAFEQQPSVGLWNLNALAHAFTPYLSVEQIKGALSQYEASLMAEFSQLMRQKLGLYENTQNTAELVNRWLDLIYQDKRDYHISFRLLCEVDEHGENQPLVDHFIQRDTAKTWLEHYQNALITQGVKRQERQANMRNINPEYVLRNYQAQLAIDAAQNGDFSRFRKLLHVLQHPFESKPEYAEFAKPPPNWGKHMEISCSS.

Residues Gly84, Gly86, Arg87, Lys107, Asp119, Gly120, Arg170, and Arg177 each coordinate ATP. The Proton acceptor role is filled by Asp246. Residues Asn247 and Asp256 each coordinate Mg(2+). Position 256 (Asp256) interacts with ATP.

The protein belongs to the SELO family. The cofactor is Mg(2+). Requires Mn(2+) as cofactor.

It catalyses the reaction L-seryl-[protein] + ATP = 3-O-(5'-adenylyl)-L-seryl-[protein] + diphosphate. The enzyme catalyses L-threonyl-[protein] + ATP = 3-O-(5'-adenylyl)-L-threonyl-[protein] + diphosphate. It carries out the reaction L-tyrosyl-[protein] + ATP = O-(5'-adenylyl)-L-tyrosyl-[protein] + diphosphate. The catalysed reaction is L-histidyl-[protein] + UTP = N(tele)-(5'-uridylyl)-L-histidyl-[protein] + diphosphate. It catalyses the reaction L-seryl-[protein] + UTP = O-(5'-uridylyl)-L-seryl-[protein] + diphosphate. The enzyme catalyses L-tyrosyl-[protein] + UTP = O-(5'-uridylyl)-L-tyrosyl-[protein] + diphosphate. Functionally, nucleotidyltransferase involved in the post-translational modification of proteins. It can catalyze the addition of adenosine monophosphate (AMP) or uridine monophosphate (UMP) to a protein, resulting in modifications known as AMPylation and UMPylation. This Pseudoalteromonas atlantica (strain T6c / ATCC BAA-1087) protein is Protein nucleotidyltransferase YdiU.